Reading from the N-terminus, the 865-residue chain is Leucine--tRNA ligase (865 aa).

The short motif at 48-58 (PYPSGQLHVGH) is the 'HIGH' region element. The short motif at 626–630 (KMSKS) is the 'KMSKS' region element. ATP is bound at residue Lys-629.

Belongs to the class-I aminoacyl-tRNA synthetase family.

Its subcellular location is the cytoplasm. The catalysed reaction is tRNA(Leu) + L-leucine + ATP = L-leucyl-tRNA(Leu) + AMP + diphosphate. The chain is Leucine--tRNA ligase from Gluconobacter oxydans (strain 621H) (Gluconobacter suboxydans).